Consider the following 701-residue polypeptide: UvrABC system protein B (701 aa).

Residues Arg-28 to Leu-188 enclose the Helicase ATP-binding domain. Residue Gly-41–Ser-48 participates in ATP binding. Residues Tyr-94–Ile-117 carry the Beta-hairpin motif. The Helicase C-terminal domain maps to Gln-432–Leu-598. The tract at residues Asp-606–Ala-636 is disordered. The UVR domain occupies Ala-656–Glu-691.

Belongs to the UvrB family. As to quaternary structure, forms a heterotetramer with UvrA during the search for lesions. Interacts with UvrC in an incision complex.

It localises to the cytoplasm. Functionally, the UvrABC repair system catalyzes the recognition and processing of DNA lesions. A damage recognition complex composed of 2 UvrA and 2 UvrB subunits scans DNA for abnormalities. Upon binding of the UvrA(2)B(2) complex to a putative damaged site, the DNA wraps around one UvrB monomer. DNA wrap is dependent on ATP binding by UvrB and probably causes local melting of the DNA helix, facilitating insertion of UvrB beta-hairpin between the DNA strands. Then UvrB probes one DNA strand for the presence of a lesion. If a lesion is found the UvrA subunits dissociate and the UvrB-DNA preincision complex is formed. This complex is subsequently bound by UvrC and the second UvrB is released. If no lesion is found, the DNA wraps around the other UvrB subunit that will check the other stand for damage. The sequence is that of UvrABC system protein B from Mycobacterium ulcerans (strain Agy99).